Here is a 673-residue protein sequence, read N- to C-terminus: UvrABC system protein B (673 aa).

One can recognise a Helicase ATP-binding domain in the interval 26-414; the sequence is ANFEAGLAKQ…AGEITELVVR (389 aa). ATP is bound at residue 39 to 46; sequence GVTGSGKT. A Beta-hairpin motif is present at residues 92 to 115; sequence YYDYYQPEAYVPSSDTFIEKDSSI. The 167-residue stretch at 431–597 folds into the Helicase C-terminal domain; it reads QVDDLMSEVH…SVARPISDIM (167 aa). Residues 601–626 are disordered; the sequence is REDAAEKKAGKGRSKSRQVAEEPADY. A UVR domain is found at 635 to 670; the sequence is AGKLKALEQKMYQHAKDLEFEAAAQIRDQILKLKAA.

This sequence belongs to the UvrB family. As to quaternary structure, forms a heterotetramer with UvrA during the search for lesions. Interacts with UvrC in an incision complex.

The protein localises to the cytoplasm. Its function is as follows. The UvrABC repair system catalyzes the recognition and processing of DNA lesions. A damage recognition complex composed of 2 UvrA and 2 UvrB subunits scans DNA for abnormalities. Upon binding of the UvrA(2)B(2) complex to a putative damaged site, the DNA wraps around one UvrB monomer. DNA wrap is dependent on ATP binding by UvrB and probably causes local melting of the DNA helix, facilitating insertion of UvrB beta-hairpin between the DNA strands. Then UvrB probes one DNA strand for the presence of a lesion. If a lesion is found the UvrA subunits dissociate and the UvrB-DNA preincision complex is formed. This complex is subsequently bound by UvrC and the second UvrB is released. If no lesion is found, the DNA wraps around the other UvrB subunit that will check the other stand for damage. The chain is UvrABC system protein B from Xanthomonas campestris pv. campestris (strain 8004).